Reading from the N-terminus, the 683-residue chain is Protein kinase C eta type (683 aa).

Residues methionine 1–phenylalanine 118 enclose the C2 domain. 2 positions are modified to phosphoserine; by autocatalysis: serine 28 and serine 32. Phorbol-ester/DAG-type zinc fingers lie at residues glycine 171–cysteine 222 and proline 245–cysteine 295. Serine 317 is modified (phosphoserine). Residues serine 320–isoleucine 342 form a disordered region. The region spanning phenylalanine 355 to phenylalanine 614 is the Protein kinase domain. Residues leucine 361–valine 369 and lysine 384 each bind ATP. Aspartate 479 functions as the Proton acceptor in the catalytic mechanism. Threonine 513 carries the phosphothreonine; by PDPK1 modification. The region spanning lysine 615–proline 683 is the AGC-kinase C-terminal domain. Threonine 656 is modified (phosphothreonine). Serine 675 carries the phosphoserine modification.

This sequence belongs to the protein kinase superfamily. AGC Ser/Thr protein kinase family. PKC subfamily. As to quaternary structure, interacts with FYN. Interacts with RALA. Interacts with DGKQ. Interacts with PRKCH upstream open reading frame 2; the interaction leads to inhibition of kinase activity. In terms of tissue distribution, most abundant in lung, less in heart and skin.

It is found in the cytoplasm. The enzyme catalyses L-seryl-[protein] + ATP = O-phospho-L-seryl-[protein] + ADP + H(+). It catalyses the reaction L-threonyl-[protein] + ATP = O-phospho-L-threonyl-[protein] + ADP + H(+). With respect to regulation, novel PKCs (PRKCD, PRKCE, PRKCH and PRKCQ) are calcium-insensitive, but activated by diacylglycerol (DAG) and phosphatidylserine. Three specific sites; Thr-513 (activation loop of the kinase domain), Thr-656 (turn motif) and Ser-675 (hydrophobic region), need to be phosphorylated for its full activation. Inhibited by PRKCH upstream open reading frame 2. Calcium-independent, phospholipid- and diacylglycerol (DAG)-dependent serine/threonine-protein kinase that is involved in the regulation of cell differentiation in keratinocytes and pre-B cell receptor, mediates regulation of epithelial tight junction integrity and foam cell formation, and is required for glioblastoma proliferation and apoptosis prevention in MCF-7 cells. In keratinocytes, binds and activates the tyrosine kinase FYN, which in turn blocks epidermal growth factor receptor (EGFR) signaling and leads to keratinocyte growth arrest and differentiation. Associates with the cyclin CCNE1-CDK2-CDKN1B complex and inhibits CDK2 kinase activity, leading to RB1 dephosphorylation and thereby G1 arrest in keratinocytes. In association with RALA activates actin depolymerization, which is necessary for keratinocyte differentiation. In the pre-B cell receptor signaling, functions downstream of BLNK by up-regulating IRF4, which in turn activates L chain gene rearrangement. Regulates epithelial tight junctions (TJs) by phosphorylating occludin (OCLN) on threonine residues, which is necessary for the assembly and maintenance of TJs. In association with PLD2 and via TLR4 signaling, is involved in lipopolysaccharide (LPS)-induced RGS2 down-regulation and foam cell formation. Upon PMA stimulation, mediates glioblastoma cell proliferation by activating the mTOR pathway, the PI3K/AKT pathway and the ERK1-dependent phosphorylation of ELK1. Involved in the protection of glioblastoma cells from irradiation-induced apoptosis by preventing caspase-9 activation. In camptothecin-treated MCF-7 cells, regulates NF-kappa-B upstream signaling by activating IKBKB, and confers protection against DNA damage-induced apoptosis. Promotes oncogenic functions of ATF2 in the nucleus while blocking its apoptotic function at mitochondria. Phosphorylates ATF2 which promotes its nuclear retention and transcriptional activity and negatively regulates its mitochondrial localization. The protein is Protein kinase C eta type (PRKCH) of Homo sapiens (Human).